The sequence spans 66 residues: MKLSFLSLAFAVIFVMAIMYAPQVEAKASADADADADAAASADALAKASAGMLDRILGAVKGFMGS.

The first 26 residues, 1–26 (MKLSFLSLAFAVIFVMAIMYAPQVEA), serve as a signal peptide directing secretion. A propeptide spanning residues 27-50 (KASADADADADAAASADALAKASA) is cleaved from the precursor.

In terms of tissue distribution, expressed by the venom gland.

Its subcellular location is the secreted. Its function is as follows. In vivo, this neurotoxin paralyzes about 50% of blowflies (L.caesar) one hour after intrathoracic injection, when tested at high doses (54 nmol/g). The sequence is that of U8-myrmicitoxin-Tb1a from Tetramorium bicarinatum (Tramp ant).